Consider the following 311-residue polypeptide: Ribosomal protein L11 methyltransferase (311 aa).

S-adenosyl-L-methionine contacts are provided by T163, G184, D206, and N248.

The protein belongs to the methyltransferase superfamily. PrmA family.

The protein resides in the cytoplasm. The catalysed reaction is L-lysyl-[protein] + 3 S-adenosyl-L-methionine = N(6),N(6),N(6)-trimethyl-L-lysyl-[protein] + 3 S-adenosyl-L-homocysteine + 3 H(+). Functionally, methylates ribosomal protein L11. This Clostridium acetobutylicum (strain ATCC 824 / DSM 792 / JCM 1419 / IAM 19013 / LMG 5710 / NBRC 13948 / NRRL B-527 / VKM B-1787 / 2291 / W) protein is Ribosomal protein L11 methyltransferase.